A 1980-amino-acid chain; its full sequence is Sodium channel protein type 8 subunit alpha (1980 aa).

Disordered stretches follow at residues 1–20 and 28–62; these read MAAR…FTPE and RIAE…LEAG. At 1–132 the chain is on the cytoplasmic side; sequence MAARLLAPPG…RIAIKILIHS (132 aa). Basic and acidic residues predominate over residues 28-61; sequence RIAESKLKKPPKADGSHREDDEDSKPKPNSDLEA. An I repeat occupies 114-442; sequence ILSPFNLIRR…KAMLEQLKKQ (329 aa). The chain crosses the membrane as a helical span at residues 133-151; that stretch reads VFSMIIMCTILTNCVFMTF. The Extracellular portion of the chain corresponds to 152 to 158; it reads SNPPDWS. A helical transmembrane segment spans residues 159–179; sequence KNVEYTFTGIYTFESLVKIIA. Topologically, residues 180–193 are cytoplasmic; it reads RGFCIDGFTFLRDP. Residues 194–211 traverse the membrane as a helical segment; sequence WNWLDFSVIMMAYITEFV. The Extracellular portion of the chain corresponds to 212–217; sequence NLGNVS. An N-linked (GlcNAc...) asparagine glycan is attached at asparagine 215. The helical transmembrane segment at 218 to 234 threads the bilayer; the sequence is ALRTFRVLRALKTISVI. Residues 235–253 lie on the Cytoplasmic side of the membrane; it reads PGLKTIVGALIQSVKKLSD. A helical membrane pass occupies residues 254–273; sequence VMILTVFCLSVFALIGLQLF. Residues 274 to 355 are Extracellular-facing; the sequence is MGNLRNKCVV…PNYGYTSFDT (82 aa). The cysteines at positions 281 and 333 are disulfide-linked. 3 N-linked (GlcNAc...) asparagine glycosylation sites follow: asparagine 289, asparagine 295, and asparagine 308. A glycan (N-linked (GlcNAc...) (high mannose) asparagine) is linked at asparagine 326. The pore-forming intramembrane region spans 356-380; sequence FSWAFLALFRLMTQDYWENLYQLTL. Residue glutamate 373 coordinates Na(+). Topologically, residues 381–387 are extracellular; the sequence is RAAGKTY. A helical membrane pass occupies residues 388-408; it reads MIFFVLVIFVGSFYLVNLILA. Topologically, residues 409 to 753 are cytoplasmic; the sequence is VVAMAYEEQN…EIVNLIVMDP (345 aa). Disordered stretches follow at residues 446-530 and 568-602; these read AQAA…KAFR and FRGP…DSLF. The segment covering 474 to 486 has biased composition (low complexity); the sequence is PRSSSEISKLSSK. Residues 489 to 500 are compositionally biased toward basic residues; that stretch reads KERRNRRKKRKQ. 2 stretches are compositionally biased toward basic and acidic residues: residues 501–530 and 586–602; these read KELS…KAFR and DEHS…DSLF. Residues serine 518 and serine 520 each carry the phosphoserine modification. One copy of the II repeat lies at 735 to 1007; the sequence is CHPYWIKLKE…QISVIRIKKG (273 aa). Residues 754 to 772 form a helical membrane-spanning segment; that stretch reads FVDLAITICIVLNTLFMAM. The Extracellular segment spans residues 773–783; that stretch reads EHHPMTPQFEH. Residues 784–803 form a helical membrane-spanning segment; it reads VLAVGNLVFTGIFTAEMFLK. Topologically, residues 804-817 are cytoplasmic; sequence LIAMDPYYYFQEGW. The helical transmembrane segment at 818–837 threads the bilayer; that stretch reads NIFDGFIVSLSLMELSLADV. Over 838-839 the chain is Extracellular; it reads EG. The helical transmembrane segment at 840–857 threads the bilayer; sequence LSVLRSFRLLRVFKLAKS. Topologically, residues 858 to 873 are cytoplasmic; it reads WPTLNMLIKIIGNSVG. The chain crosses the membrane as a helical span at residues 874–892; that stretch reads ALGNLTLVLAIIVFIFAVV. At 893–921 the chain is on the extracellular side; that stretch reads GMQLFGKSYKECVCKINQDCELPRWHMHD. Cysteine 906 and cysteine 912 are disulfide-bonded. The segment at residues 922 to 942 is an intramembrane region (pore-forming); the sequence is FFHSFLIVFRVLCGEWIETMW. The Na(+) site is built by glutamate 936 and glutamate 939. Over 943-955 the chain is Extracellular; sequence DCMEVAGQAMCLI. Cysteine 944 and cysteine 953 form a disulfide bridge. Residues 956–976 form a helical membrane-spanning segment; that stretch reads VFMMVMVIGNLVVLNLFLALL. Topologically, residues 977–1199 are cytoplasmic; it reads LSSFSADNLA…TCFLIVEHNW (223 aa). Residues 1107–1148 are disordered; the sequence is NLNTEDVSSESDPEGSKDKLDDTSSSEGSTIDIKPEVEEVPV. One copy of the III repeat lies at 1180–1495; that stretch reads LGKSWWILRK…KKYYNAMKKL (316 aa). Residues 1200-1217 traverse the membrane as a helical segment; it reads FETFIIFMILLSSGALAF. Residues 1218–1230 are Extracellular-facing; sequence EDIYIEQRKTIRT. A helical membrane pass occupies residues 1231–1249; the sequence is ILEYADKVFTYIFILEMLL. At 1250–1263 the chain is on the cytoplasmic side; it reads KWTAYGFVKFFTNA. The chain crosses the membrane as a helical span at residues 1264-1282; it reads WCWLDFLIVAVSLVSLIAN. Residues 1283–1290 lie on the Extracellular side of the membrane; that stretch reads ALGYSELG. The helical transmembrane segment at 1291–1309 threads the bilayer; it reads AIKSLRTLRALRPLRALSR. The Cytoplasmic segment spans residues 1310-1326; it reads FEGMRVVVNALVGAIPS. Residues 1327-1346 form a helical membrane-spanning segment; it reads IMNVLLVCLIFWLIFSIMGV. Over 1347–1399 the chain is Extracellular; it reads NLFAGKYHYCFNETSEIRFEIEDVNNKTECEKLMEGNNTEIRWKNVKINFDNV. A disulfide bond links cysteine 1356 and cysteine 1376. N-linked (GlcNAc...) asparagine glycosylation is found at asparagine 1358, asparagine 1372, and asparagine 1383. The pore-forming intramembrane region spans 1400–1421; the sequence is GAGYLALLQVATFKGWMDIMYA. Topologically, residues 1422–1438 are extracellular; sequence AVDSRKPDEQPKYEDNI. The helical transmembrane segment at 1439-1460 threads the bilayer; the sequence is YMYIYFVIFIIFGSFFTLNLFI. At 1461–1523 the chain is on the cytoplasmic side; that stretch reads GVIIDNFNQQ…IVFDFVTQQA (63 aa). Serine 1497 bears the Phosphoserine; by PKC mark. An IV repeat occupies 1504–1801; sequence IPRPLNKIQG…WEKFDPDATQ (298 aa). The chain crosses the membrane as a helical span at residues 1524-1541; it reads FDIVIMMLICLNMVTMMV. The Extracellular segment spans residues 1542 to 1552; it reads ETDTQSKQMEN. A helical transmembrane segment spans residues 1553–1571; it reads ILYWINLVFVIFFTCECVL. At 1572 to 1583 the chain is on the cytoplasmic side; that stretch reads KMFALRHYYFTI. The chain crosses the membrane as a helical span at residues 1584–1601; it reads GWNIFDFVVVILSIVGMF. The Extracellular portion of the chain corresponds to 1602 to 1614; it reads LADIIEKYFVSPT. A helical membrane pass occupies residues 1615–1631; it reads LFRVIRLARIGRILRLI. The Cytoplasmic portion of the chain corresponds to 1632 to 1650; that stretch reads KGAKGIRTLLFALMMSLPA. A helical membrane pass occupies residues 1651 to 1668; that stretch reads LFNIGLLLFLVMFIFSIF. Over 1669–1690 the chain is Extracellular; that stretch reads GMSNFAYVKHEAGIDDMFNFET. Residues 1691-1713 constitute an intramembrane region (pore-forming); the sequence is FGNSMICLFQITTSAGWDGLLLP. Residues 1714 to 1742 lie on the Extracellular side of the membrane; that stretch reads ILNRPPDCSLDKEHPGSGFKGDCGNPSVG. The cysteines at positions 1721 and 1736 are disulfide-linked. Residues 1743–1765 traverse the membrane as a helical segment; that stretch reads IFFFVSYIIISFLIVVNMYIAII. Over 1766–1980 the chain is Cytoplasmic; sequence LENFSVATEE…RQKEVRESKC (215 aa). The IQ domain maps to 1895–1924; sequence EEVSAVVLQRAYRGHLARRGFICKKTTSNK. Residues 1922 to 1980 are disordered; it reads SNKLENGGTHREKKESTPSTASLPSYDSVTKPEKEKQQRAEEGRRERAKRQKEVRESKC. Positions 1938 to 1949 are enriched in polar residues; that stretch reads TPSTASLPSYDS. The span at 1951 to 1980 shows a compositional bias: basic and acidic residues; the sequence is TKPEKEKQQRAEEGRRERAKRQKEVRESKC.

The protein belongs to the sodium channel (TC 1.A.1.10) family. Nav1.6/SCN8A subfamily. In terms of assembly, the voltage-sensitive sodium channel consists of an ion-conducting pore-forming alpha subunit regulated by one or more beta-1 (SCN1B), beta-2 (SCN2B), beta-3 (SCN3B) and/or beta-4 (SCN4B) subunits. Beta-1 (SCN1B) and beta-3 (SCN3B) are non-covalently associated with alpha, while beta-2 (SCN2B) and beta-4 (SCN4B) are covalently linked by disulfide bonds. Interacts with NEDD4 and NEDD4L. Interacts with FGF13. Interacts with FGF14, GBG3, GBB2 and SCN1B. Interacts with TMEM233. Interacts with the conotoxin GVIIJ. Interacts with the spider beta/delta-theraphotoxin-Pre1a. Interacts with CALM1; the interaction modulates the inactivation rate of SCN8A. Post-translationally, may be ubiquitinated by NEDD4L; which would promote its endocytosis. Phosphorylation at Ser-1497 by PKC in a highly conserved cytoplasmic loop slows inactivation of the sodium channel and reduces peak sodium currents. In terms of tissue distribution, expressed in the hippocampus with increased expression in epileptic tissue compared to normal adjacent tissue (at protein level). As to expression, expressed in non-neuronal tissues, such as monocytes/macrophages.

It is found in the cell membrane. The protein localises to the cell projection. Its subcellular location is the axon. It localises to the cytoplasmic vesicle. The protein resides in the podosome. The enzyme catalyses Na(+)(in) = Na(+)(out). Inhibited by tetrodotoxin and, more weakly, by its metabolite 4,9-ah-tetrodotoxin. Functionally, pore-forming subunit of a voltage-gated sodium channel complex assuming opened or closed conformations in response to the voltage difference across membranes and through which sodium ions selectively pass along their electrochemical gradient. Contributes to neuronal excitability by regulating action potential threshold and propagation. Its function is as follows. More specifically expressed in non-neuronal cells, could play a role in sodium release from intracellular compartments and participate in the control of podosomes formation and macrophages adhesion and movement. This Homo sapiens (Human) protein is Sodium channel protein type 8 subunit alpha.